We begin with the raw amino-acid sequence, 286 residues long: ATP synthase gamma chain (286 aa).

The protein belongs to the ATPase gamma chain family. F-type ATPases have 2 components, CF(1) - the catalytic core - and CF(0) - the membrane proton channel. CF(1) has five subunits: alpha(3), beta(3), gamma(1), delta(1), epsilon(1). CF(0) has three main subunits: a, b and c.

The protein resides in the cell inner membrane. In terms of biological role, produces ATP from ADP in the presence of a proton gradient across the membrane. The gamma chain is believed to be important in regulating ATPase activity and the flow of protons through the CF(0) complex. This chain is ATP synthase gamma chain, found in Shewanella piezotolerans (strain WP3 / JCM 13877).